A 469-amino-acid polypeptide reads, in one-letter code: Glutamate--tRNA ligase (469 aa).

A 'HIGH' region motif is present at residues 9–19; that stretch reads PSPTGFLHVGG. Zn(2+)-binding residues include C98, C100, C125, and D127. Residues 236–240 carry the 'KMSKS' region motif; that stretch reads KLSKR. K239 serves as a coordination point for ATP.

It belongs to the class-I aminoacyl-tRNA synthetase family. Glutamate--tRNA ligase type 1 subfamily. Monomer. Requires Zn(2+) as cofactor.

The protein resides in the cytoplasm. The catalysed reaction is tRNA(Glu) + L-glutamate + ATP = L-glutamyl-tRNA(Glu) + AMP + diphosphate. Catalyzes the attachment of glutamate to tRNA(Glu) in a two-step reaction: glutamate is first activated by ATP to form Glu-AMP and then transferred to the acceptor end of tRNA(Glu). The chain is Glutamate--tRNA ligase from Shewanella baltica (strain OS185).